Consider the following 384-residue polypeptide: MGGRAIVTDTNIFSGLESNTTGVTAFSMPAWQLALWATAYLGLVLVAVTGNATVIWIILAHERMRTVTNYFIINLALADLCMAAFNATFNFVYASHNIWYFGRAFCYFQNLFPITAMFVSIYSMTAIAADRYMAIVHPFQPRLSAPITKATIAGIWLVALALASPQCFYSTITVDQGATKCVVAWPNDNGGKMLLLYHLVVFVLVYFLPLVVMFVAYSVIGLTLWKRAVPRHQAHGANLRHLHAKKKFVKAMVLVVLTFAICWLPYHLYFILGSFQKDIYYRKFIQQVYLALFWLAMSSTMYNPIIYCCLNHRFRSGFRLAFRCCPWVTPTEEDRLELTRTPSLSRRVNRCHTKETLFMTADMTHSEATNGQVGSPQDVEPAAP.

Over 1-32 (MGGRAIVTDTNIFSGLESNTTGVTAFSMPAWQ) the chain is Extracellular. A glycan (N-linked (GlcNAc...) asparagine) is linked at Asn19. The helical transmembrane segment at 33–56 (LALWATAYLGLVLVAVTGNATVIW) threads the bilayer. The Cytoplasmic segment spans residues 57–69 (IILAHERMRTVTN). Residues 70–90 (YFIINLALADLCMAAFNATFN) form a helical membrane-spanning segment. Residues 91-107 (FVYASHNIWYFGRAFCY) lie on the Extracellular side of the membrane. A disulfide bridge connects residues Cys106 and Cys181. The chain crosses the membrane as a helical span at residues 108 to 129 (FQNLFPITAMFVSIYSMTAIAA). The Cytoplasmic segment spans residues 130 to 149 (DRYMAIVHPFQPRLSAPITK). A helical transmembrane segment spans residues 150-170 (ATIAGIWLVALALASPQCFYS). The Extracellular portion of the chain corresponds to 171–196 (TITVDQGATKCVVAWPNDNGGKMLLL). The helical transmembrane segment at 197–218 (YHLVVFVLVYFLPLVVMFVAYS) threads the bilayer. The Cytoplasmic segment spans residues 219 to 251 (VIGLTLWKRAVPRHQAHGANLRHLHAKKKFVKA). The chain crosses the membrane as a helical span at residues 252–272 (MVLVVLTFAICWLPYHLYFIL). The Extracellular segment spans residues 273–290 (GSFQKDIYYRKFIQQVYL). Residues 291 to 310 (ALFWLAMSSTMYNPIIYCCL) traverse the membrane as a helical segment. Residues 311-384 (NHRFRSGFRL…SPQDVEPAAP (74 aa)) lie on the Cytoplasmic side of the membrane. Cys324 carries the S-palmitoyl cysteine lipid modification.

This sequence belongs to the G-protein coupled receptor 1 family.

It localises to the cell membrane. Its function is as follows. This is a receptor for the tachykinin neuropeptide substance K (neurokinin A). It is associated with G proteins that activate a phosphatidylinositol-calcium second messenger system. The rank order of affinity of this receptor to tachykinins is: substance K &gt; neuromedin-K &gt; substance P. This is Substance-K receptor (TACR2) from Mesocricetus auratus (Golden hamster).